The chain runs to 611 residues: Adenosylhomocysteinase 3 (611 aa).

3 stretches are compositionally biased toward low complexity: residues 1-14 (MSVQ…AAKV), 36-57 (AAVG…APAA), and 68-81 (GPAA…GKVP). Residues 1 to 184 (MSVQVVSAAA…KQQKNSKGSS (184 aa)) are disordered. Ser2 carries the post-translational modification N-acetylserine. Residues 2 to 109 (SVQVVSAAAA…DGGEALVSPD (108 aa)) are LISN domain, inhibits interaction with ITPR1. Ser107 carries the post-translational modification Phosphoserine. Over residues 135–144 (RPTKIGRRSL) the composition is skewed to basic residues. Residues 145 to 164 (SRSISQSSTDSYSSAASYTD) show a composition bias toward low complexity. Residues Ser149, Ser152, Ser155, and Ser158 each carry the phosphoserine modification. Thr236, Asp310, and Glu335 together coordinate substrate. 336–338 (SVT) provides a ligand contact to NAD(+). Lys365 and Asp369 together coordinate substrate. Residues Asn370, 401–406 (GEVGKG), Glu422, Asn457, 478–479 (MG), and Asn525 contribute to the NAD(+) site.

Belongs to the adenosylhomocysteinase family. Homotetramer. Forms heteromultimers with AHCYL1 (via the C-terminal region). Interacts with ITPR1; with lower affinity than AHCYL1 and maybe via ITPR1. Interacts with SLC4A4. Interacts with ZCCHC4. NAD(+) serves as cofactor. Phosphorylated during neuronal differentiation at the LISN domain.

The protein localises to the cytoplasm. It is found in the microsome. The catalysed reaction is S-adenosyl-L-homocysteine + H2O = L-homocysteine + adenosine. It participates in amino-acid biosynthesis; L-homocysteine biosynthesis; L-homocysteine from S-adenosyl-L-homocysteine: step 1/1. May regulate the electrogenic sodium/bicarbonate cotransporter SLC4A4 activity and Mg(2+)-sensitivity. On the contrary of its homolog AHCYL1, does not regulate ITPR1 sensitivity to inositol 1,4,5-trisphosphate. The sequence is that of Adenosylhomocysteinase 3 (AHCYL2) from Homo sapiens (Human).